A 96-amino-acid chain; its full sequence is UPF0235 protein YggU (96 aa).

The protein belongs to the UPF0235 family.

This Salmonella agona (strain SL483) protein is UPF0235 protein YggU.